The primary structure comprises 184 residues: MPHTQTDAHQNNQENFSSSLISSRPSQPMTLSIQRLDHGQGLELPHYATAGSAGLDLRAALSEEETVILAPGQRALIPTGLIFHLSPGFEAQIRPRSGLALKHGITCLNTPGTIDSDYRGEVKVLLINCGQEDFAIKRGMRIAQTVIAPVLQVNVCALEPQQNESTKNTVGNRGAGGFGSTGHD.

The span at 1 to 16 shows a compositional bias: polar residues; the sequence is MPHTQTDAHQNNQENF. Residues 1-25 form a disordered region; sequence MPHTQTDAHQNNQENFSSSLISSRP. Residues 96–98, Asn-109, 113–115, and Lys-123 each bind substrate; these read RSG and TID. The interval 165 to 184 is disordered; it reads STKNTVGNRGAGGFGSTGHD. Positions 173-184 are enriched in gly residues; it reads RGAGGFGSTGHD.

Belongs to the dUTPase family. Mg(2+) serves as cofactor.

The catalysed reaction is dUTP + H2O = dUMP + diphosphate + H(+). It functions in the pathway pyrimidine metabolism; dUMP biosynthesis; dUMP from dCTP (dUTP route): step 2/2. This enzyme is involved in nucleotide metabolism: it produces dUMP, the immediate precursor of thymidine nucleotides and it decreases the intracellular concentration of dUTP so that uracil cannot be incorporated into DNA. The protein is Deoxyuridine 5'-triphosphate nucleotidohydrolase of Bartonella henselae (strain ATCC 49882 / DSM 28221 / CCUG 30454 / Houston 1) (Rochalimaea henselae).